The chain runs to 188 residues: Hypoxanthine/guanine phosphoribosyltransferase (188 aa).

The protein belongs to the purine/pyrimidine phosphoribosyltransferase family. Archaeal HPRT subfamily. As to quaternary structure, homodimer.

The protein resides in the cytoplasm. The catalysed reaction is IMP + diphosphate = hypoxanthine + 5-phospho-alpha-D-ribose 1-diphosphate. The enzyme catalyses GMP + diphosphate = guanine + 5-phospho-alpha-D-ribose 1-diphosphate. It functions in the pathway purine metabolism; IMP biosynthesis via salvage pathway; IMP from hypoxanthine: step 1/1. Functionally, catalyzes a salvage reaction resulting in the formation of IMP that is energically less costly than de novo synthesis. This chain is Hypoxanthine/guanine phosphoribosyltransferase, found in Methanobrevibacter ruminantium (strain ATCC 35063 / DSM 1093 / JCM 13430 / OCM 146 / M1) (Methanobacterium ruminantium).